A 635-amino-acid chain; its full sequence is Threonine--tRNA ligase (635 aa).

Residues 1–58 enclose the TGS domain; that stretch reads MIHVTCNQEAFELPEGASAMDLANKMKQSHCFVGALINDQEKDLSTTLQDGDTVLFLT. Residues 237-528 are catalytic; it reads DHRVLGTKLD…LIEHFKGRFP (292 aa). 3 residues coordinate Zn(2+): Cys-328, His-379, and His-505.

The protein belongs to the class-II aminoacyl-tRNA synthetase family. Homodimer. It depends on Zn(2+) as a cofactor.

The protein localises to the cytoplasm. It catalyses the reaction tRNA(Thr) + L-threonine + ATP = L-threonyl-tRNA(Thr) + AMP + diphosphate + H(+). Functionally, catalyzes the attachment of threonine to tRNA(Thr) in a two-step reaction: L-threonine is first activated by ATP to form Thr-AMP and then transferred to the acceptor end of tRNA(Thr). Also edits incorrectly charged L-seryl-tRNA(Thr). This Chlamydia trachomatis serovar L2b (strain UCH-1/proctitis) protein is Threonine--tRNA ligase.